The sequence spans 367 residues: o-succinylbenzoate synthase (367 aa).

The active-site Proton donor is the Lys164. Residues Asp189, Glu214, and Asp239 each coordinate Mg(2+). Catalysis depends on Lys263, which acts as the Proton acceptor.

This sequence belongs to the mandelate racemase/muconate lactonizing enzyme family. MenC type 2 subfamily. Homodimer. A divalent metal cation serves as cofactor.

It carries out the reaction (1R,6R)-6-hydroxy-2-succinyl-cyclohexa-2,4-diene-1-carboxylate = 2-succinylbenzoate + H2O. It participates in quinol/quinone metabolism; 1,4-dihydroxy-2-naphthoate biosynthesis; 1,4-dihydroxy-2-naphthoate from chorismate: step 4/7. It functions in the pathway quinol/quinone metabolism; menaquinone biosynthesis. Converts 2-succinyl-6-hydroxy-2,4-cyclohexadiene-1-carboxylate (SHCHC) to 2-succinylbenzoate (OSB). Also acts as a N-succinylamino acid racemase (NSAR) that catalyzes the racemization of N-succinyl-L-phenylglycine. Since the gene is encoded in a menaquinone synthesis operon, OSB synthase is probably the physiological activity. A pathway that requires NSAR activity has not been identified in this species, so whether NSAR is also a biological activity is unknown. This chain is o-succinylbenzoate synthase, found in Enterococcus faecalis (strain ATCC 700802 / V583).